Consider the following 249-residue polypeptide: Uroplakin-3b-like protein 1 (249 aa).

The signal sequence occupies residues 1–26 (MGPHGKQSVLRMPLLLLLTCVQSGTG). The Extracellular portion of the chain corresponds to 27-194 (LESINYAPQL…PGSQGKGTVV (168 aa)). Residues asparagine 63, asparagine 82, and asparagine 133 are each glycosylated (N-linked (GlcNAc...) asparagine). The chain crosses the membrane as a helical span at residues 195-215 (IIAFLSILLAILLVVFLVLVI). Residues 216-249 (SACLSTSGSSPEEQVRMRHYHTHHMGSLRAERSS) lie on the Cytoplasmic side of the membrane.

Belongs to the uroplakin-3 family.

It localises to the membrane. The protein is Uroplakin-3b-like protein 1 of Mus musculus (Mouse).